The chain runs to 1171 residues: MSLRFVIGRAGSGKSTLCLREVQEELKQRPRGKTILYLVPEQMTFQTQQALIGSEDVRGSIRAQVFSFSRLAWKVLQEVGGASRLHIDEAGVHMLLRKIVESRKDGLSVFQKAAEQNGFFEHLGSMIAEFKRYNVTPSNVYEMWQQLDAHSSSAEQKLLANKVYDLQLLYDDFERALIGKYLDSEDYLQLLVEKLPQSEYVNGAEIYIDGFHSFSPQELEIVRQLMICGARVTITLTIDEKTLAQPVNELDLFYETTLTYEKIKQVAREEKIEIEKTIPLMEQPRFHSPALAHLEAHYEARPNEKFNGEASVTISTAANLRAEVEGVAREIRKLVADEKYRYRDIAVLLRNGESYYDVMRTLFTDYNIPHFIDEKRPMSHHPLVECIRSALEIISGNWRYDAVFRCVKTELLYPLDVRKETMREEMDEFENYCLAYGVQGKRWTSEDPWMYRRYRSLDDTNGMITDSEREMEEKINRLRDVVRTPVIRMQKRLKRAGTVMQMCEAVYLFLEELDVPKKLEELRIRAEESGDFLFATDHEQVWEEVMSLLDTFVEMLGEEKMSLSMFTDVMSTGLEALQFANIPPSLDQVLIANIDHSRLSDVKATFIIGVNEGVIPAAPMDEGMLSDEEREVLGAAGIELAPTTRQTLLEEQFVMYQMVTRASEKLYISCPLADEEGKTLLASSFIKKIKRMFPNVKDSFITNDVNDLSRSEQISYVATPEVTLSYVMQQLQTWKRYGFEGNLDFWWDVYNFYVTSDEWKQKSSRVLSSLFYRNRAKKLSTAVSRDLYGDIIKGSVSRMELFNRCAYAHFAQHGLSLRERDIFKLDAPDIGELFHAALKKIADKLLRENRTWADLSIKECEHLSVLVIEEIAPLLQRQILLSSNRHFYLKQKLQQIIFRTSIILREHAKSSGFVPVDLEVPFGMGGTGSLPPMEFSLPNGVKMEVVGRIDRVDKAEDENGTFLRIIDYKSSSKVLDLTEVYYGLALQMLTYLDVVTSNAQTWMKKGHAASPAGVLYFHIHNPIVEMKGDASEAEIEKEILKKFKMKGLVLGDADVVRLMDNKLSTGSSDIISAGLKKDGSFSARSSIASEQEFNVLQKYVHHTFENIGKDITEGVIDIAPYKMGNKAACTFCNFKSVCQFDESLEDNQFRSLKDMKDSEAMEKIREEVGGE.

In terms of domain architecture, UvrD-like helicase ATP-binding spans 1 to 390 (MSLRFVIGRA…HPLVECIRSA (390 aa)). 8–15 (GRAGSGKS) is an ATP binding site. In terms of domain architecture, UvrD-like helicase C-terminal spans 281-587 (MEQPRFHSPA…QFANIPPSLD (307 aa)). Residues Cys805, Cys1129, Cys1132, and Cys1138 each coordinate [4Fe-4S] cluster.

The protein belongs to the helicase family. AddB/RexB type 1 subfamily. In terms of assembly, heterodimer of AddA and AddB. Mg(2+) serves as cofactor. It depends on [4Fe-4S] cluster as a cofactor.

The heterodimer acts as both an ATP-dependent DNA helicase and an ATP-dependent, dual-direction single-stranded exonuclease. Recognizes the chi site generating a DNA molecule suitable for the initiation of homologous recombination. The AddB subunit has 5' -&gt; 3' nuclease activity but not helicase activity. This Bacillus cereus (strain B4264) protein is ATP-dependent helicase/deoxyribonuclease subunit B.